The following is a 215-amino-acid chain: Cytochrome b6 (215 aa).

The helical transmembrane segment at 32 to 52 threads the bilayer; sequence IFYCLGGITLTCFLVQVATGF. Cys-35 serves as a coordination point for heme c. 2 residues coordinate heme b: His-86 and His-100. Transmembrane regions (helical) follow at residues 90 to 110, 116 to 136, and 186 to 206; these read ASMMVLMMILHVFRVYLTGGF, LTWVTGVVLAVLTASFGVTGY, and LHTFVLPLLTAVFMLMHFPMI. 2 residues coordinate heme b: His-187 and His-202.

Belongs to the cytochrome b family. PetB subfamily. As to quaternary structure, the 4 large subunits of the cytochrome b6-f complex are cytochrome b6, subunit IV (17 kDa polypeptide, PetD), cytochrome f and the Rieske protein, while the 4 small subunits are PetG, PetL, PetM and PetN. The complex functions as a dimer. It depends on heme b as a cofactor. Heme c is required as a cofactor.

The protein localises to the plastid. It localises to the chloroplast thylakoid membrane. Component of the cytochrome b6-f complex, which mediates electron transfer between photosystem II (PSII) and photosystem I (PSI), cyclic electron flow around PSI, and state transitions. In Solanum bulbocastanum (Wild potato), this protein is Cytochrome b6.